A 242-amino-acid polypeptide reads, in one-letter code: Anthranilate phosphoribosyltransferase (242 aa).

Residues glycine 79, 82–83 (GD), threonine 87, 89–92 (NVST), 107–115 (KHGNRAVSS), and serine 119 contribute to the 5-phospho-alpha-D-ribose 1-diphosphate site. Glycine 79 is an anthranilate binding site. A Mg(2+)-binding site is contributed by serine 91. Position 110 (asparagine 110) interacts with anthranilate. Arginine 165 is an anthranilate binding site. Mg(2+) contacts are provided by aspartate 224 and glutamate 225.

The protein belongs to the anthranilate phosphoribosyltransferase family. Homodimer. The cofactor is Mg(2+).

The catalysed reaction is N-(5-phospho-beta-D-ribosyl)anthranilate + diphosphate = 5-phospho-alpha-D-ribose 1-diphosphate + anthranilate. Its pathway is amino-acid biosynthesis; L-tryptophan biosynthesis; L-tryptophan from chorismate: step 2/5. Catalyzes the transfer of the phosphoribosyl group of 5-phosphorylribose-1-pyrophosphate (PRPP) to anthranilate to yield N-(5'-phosphoribosyl)-anthranilate (PRA). This chain is Anthranilate phosphoribosyltransferase (trpD), found in Bacillus caldotenax.